A 262-amino-acid chain; its full sequence is Acyl-[acyl-carrier-protein]--UDP-N-acetylglucosamine O-acyltransferase (262 aa).

This sequence belongs to the transferase hexapeptide repeat family. LpxA subfamily. In terms of assembly, homotrimer.

It localises to the cytoplasm. The catalysed reaction is a (3R)-hydroxyacyl-[ACP] + UDP-N-acetyl-alpha-D-glucosamine = a UDP-3-O-[(3R)-3-hydroxyacyl]-N-acetyl-alpha-D-glucosamine + holo-[ACP]. It participates in glycolipid biosynthesis; lipid IV(A) biosynthesis; lipid IV(A) from (3R)-3-hydroxytetradecanoyl-[acyl-carrier-protein] and UDP-N-acetyl-alpha-D-glucosamine: step 1/6. Functionally, involved in the biosynthesis of lipid A, a phosphorylated glycolipid that anchors the lipopolysaccharide to the outer membrane of the cell. This chain is Acyl-[acyl-carrier-protein]--UDP-N-acetylglucosamine O-acyltransferase, found in Salmonella arizonae (strain ATCC BAA-731 / CDC346-86 / RSK2980).